The following is a 187-amino-acid chain: Small ribosomal subunit protein uS5 (187 aa).

The segment at 1–20 (MAERENRRDRRDDRSREETP) is disordered. The S5 DRBM domain occupies 22 to 85 (FADRLVAINR…EQAKRQMIRV (64 aa)). The tract at residues 154 to 174 (DGLKRESSPRQVAQRRGKKVA) is disordered.

Belongs to the universal ribosomal protein uS5 family. As to quaternary structure, part of the 30S ribosomal subunit. Contacts proteins S4 and S8.

With S4 and S12 plays an important role in translational accuracy. In terms of biological role, located at the back of the 30S subunit body where it stabilizes the conformation of the head with respect to the body. The chain is Small ribosomal subunit protein uS5 from Cereibacter sphaeroides (strain ATCC 17025 / ATH 2.4.3) (Rhodobacter sphaeroides).